Consider the following 387-residue polypeptide: Small ribosomal subunit biogenesis GTPase RsgA (387 aa).

Positions 112 to 273 constitute a CP-type G domain; sequence YDGLKPVAAN…LIDSPGVREF (162 aa). GTP is bound by residues 159 to 162 and 213 to 221; these read NKID and GQSGVGKSS. 4 residues coordinate Zn(2+): Cys297, Cys302, His304, and Cys310.

It belongs to the TRAFAC class YlqF/YawG GTPase family. RsgA subfamily. As to quaternary structure, monomer. Associates with 30S ribosomal subunit, binds 16S rRNA. It depends on Zn(2+) as a cofactor.

Its subcellular location is the cytoplasm. In terms of biological role, one of several proteins that assist in the late maturation steps of the functional core of the 30S ribosomal subunit. Helps release RbfA from mature subunits. May play a role in the assembly of ribosomal proteins into the subunit. Circularly permuted GTPase that catalyzes slow GTP hydrolysis, GTPase activity is stimulated by the 30S ribosomal subunit. The polypeptide is Small ribosomal subunit biogenesis GTPase RsgA (Vibrio cholerae serotype O1 (strain ATCC 39315 / El Tor Inaba N16961)).